An 89-amino-acid chain; its full sequence is Small ribosomal subunit protein uS15 (89 aa).

It belongs to the universal ribosomal protein uS15 family. Part of the 30S ribosomal subunit. Forms a bridge to the 50S subunit in the 70S ribosome, contacting the 23S rRNA.

Its function is as follows. One of the primary rRNA binding proteins, it binds directly to 16S rRNA where it helps nucleate assembly of the platform of the 30S subunit by binding and bridging several RNA helices of the 16S rRNA. Functionally, forms an intersubunit bridge (bridge B4) with the 23S rRNA of the 50S subunit in the ribosome. This is Small ribosomal subunit protein uS15 from Proteus mirabilis (strain HI4320).